The chain runs to 184 residues: Protein Syd (184 aa).

Belongs to the Syd family.

It is found in the cell inner membrane. Functionally, interacts with the SecY protein in vivo. May bind preferentially to an uncomplexed state of SecY, thus functioning either as a chelating agent for excess SecY in the cell or as a regulatory factor that negatively controls the translocase function. The polypeptide is Protein Syd (Photobacterium profundum (strain SS9)).